A 511-amino-acid chain; its full sequence is 2,3-bisphosphoglycerate-independent phosphoglycerate mutase (511 aa).

Residue Asp-12 participates in Mn(2+) binding. The residue at position 36 (Tyr-36) is a Phosphotyrosine. Ser-62 contacts Mn(2+). The active-site Phosphoserine intermediate is the Ser-62. Residues His-123, 153-154 (RD), Arg-185, Arg-191, 261-264 (RPDR), and Lys-336 each bind substrate. 5 residues coordinate Mn(2+): Asp-403, His-407, Asp-444, His-445, and His-462.

Belongs to the BPG-independent phosphoglycerate mutase family. In terms of assembly, monomer. It depends on Mn(2+) as a cofactor.

It catalyses the reaction (2R)-2-phosphoglycerate = (2R)-3-phosphoglycerate. It participates in carbohydrate degradation; glycolysis; pyruvate from D-glyceraldehyde 3-phosphate: step 3/5. In terms of biological role, essential for rapid growth and for sporulation. Catalyzes the interconversion of 2-phosphoglycerate and 3-phosphoglycerate. The protein is 2,3-bisphosphoglycerate-independent phosphoglycerate mutase of Bacillus licheniformis (strain ATCC 14580 / DSM 13 / JCM 2505 / CCUG 7422 / NBRC 12200 / NCIMB 9375 / NCTC 10341 / NRRL NRS-1264 / Gibson 46).